The sequence spans 336 residues: NADH-quinone oxidoreductase subunit H (336 aa).

8 helical membrane-spanning segments follow: residues 14–34 (IIVAQILALMVPILVSVAFLV), 82–102 (IIFLAAPMLTMMLALAAWAVI), 115–135 (VGILYLLAISSQGVYGIIMAG), 161–181 (IGLVIITVLLCVGSLNLSDVV), 186–206 (TVWFAIPLLPMFVIFFISALA), 247–267 (ILMSAMTSVLFLGGWLPPLDV), 273–293 (VPGPIWFILKICFCLFLFVWV), and 312–332 (VFLPFSLVWVILTAGVLVTFD).

This sequence belongs to the complex I subunit 1 family. As to quaternary structure, NDH-1 is composed of 14 different subunits. Subunits NuoA, H, J, K, L, M, N constitute the membrane sector of the complex.

It is found in the cell inner membrane. The enzyme catalyses a quinone + NADH + 5 H(+)(in) = a quinol + NAD(+) + 4 H(+)(out). Its function is as follows. NDH-1 shuttles electrons from NADH, via FMN and iron-sulfur (Fe-S) centers, to quinones in the respiratory chain. The immediate electron acceptor for the enzyme in this species is believed to be ubiquinone. Couples the redox reaction to proton translocation (for every two electrons transferred, four hydrogen ions are translocated across the cytoplasmic membrane), and thus conserves the redox energy in a proton gradient. This subunit may bind ubiquinone. This Rhodospirillum centenum (strain ATCC 51521 / SW) protein is NADH-quinone oxidoreductase subunit H.